The following is a 315-amino-acid chain: NAD(P)H-dependent 6'-deoxychalcone synthase (315 aa).

The active-site Proton donor is Tyr59. His121 lines the substrate pocket. 216–274 serves as a coordination point for NADP(+); that stretch reads SPLRKGASRGPNEVMENDVLKEIAEAHGKSIAQVSLRWLYEQGVTFVPKSYDKERMNQN.

Belongs to the aldo/keto reductase family. Monomer.

It catalyses the reaction 4-coumaroyl-CoA + 3 malonyl-CoA + NADPH + 4 H(+) = isoliquiritigenin + 3 CO2 + NADP(+) + 4 CoA + H2O. It participates in phytoalexin biosynthesis; glyceollin biosynthesis. Functionally, co-acts with chalcone synthase in formation of 4,2',4'-trihydroxychalcone, involved in the biosynthesis of glyceollin type phytoalexins. The chain is NAD(P)H-dependent 6'-deoxychalcone synthase from Glycine max (Soybean).